A 420-amino-acid polypeptide reads, in one-letter code: Bone morphogenetic protein 2 (420 aa).

An N-terminal signal peptide occupies residues 1-23 (MVAVVRSLMVLLLAQVLLEGATG). A propeptide spanning residues 24–303 (LIPEVGRRRY…DSVLHTREKR (280 aa)) is cleaved from the precursor. N-linked (GlcNAc...) asparagine glycosylation is found at N138, N167, N168, N172, and N362. 3 disulfide bridges follow: C320–C385, C349–C417, and C353–C419.

This sequence belongs to the TGF-beta family. In terms of assembly, homodimer; disulfide-linked.

The protein resides in the secreted. Its function is as follows. Induces cartilage and bone formation. The polypeptide is Bone morphogenetic protein 2 (bmp2) (Tetraodon nigroviridis (Spotted green pufferfish)).